The primary structure comprises 304 residues: Ribosomal protein L11 methyltransferase (304 aa).

Residues Thr-156, Gly-177, Asp-199, and Asn-240 each contribute to the S-adenosyl-L-methionine site.

It belongs to the methyltransferase superfamily. PrmA family.

It is found in the cytoplasm. The catalysed reaction is L-lysyl-[protein] + 3 S-adenosyl-L-methionine = N(6),N(6),N(6)-trimethyl-L-lysyl-[protein] + 3 S-adenosyl-L-homocysteine + 3 H(+). In terms of biological role, methylates ribosomal protein L11. The chain is Ribosomal protein L11 methyltransferase from Symbiobacterium thermophilum (strain DSM 24528 / JCM 14929 / IAM 14863 / T).